A 350-amino-acid polypeptide reads, in one-letter code: Beta-ketodecanoyl-[acyl-carrier-protein] synthase (350 aa).

The active site involves Cys133.

Belongs to the thiolase-like superfamily. Beta-ketoacyl-ACP synthases family.

The enzyme catalyses octanoyl-CoA + malonyl-[ACP] + H(+) = 3-oxodecanoyl-[ACP] + CO2 + CoA. It participates in lipid metabolism; fatty acid biosynthesis. In terms of biological role, catalyzes the condensation of octanoyl-CoA, obtained from exogenously supplied fatty acids via beta-oxidation, with malonyl-[acyl-carrier protein], forming 3-oxodecanoyl-[acyl-carrier protein], an intermediate of the fatty acid elongation cycle that can then be extended to supply all of the cellular fatty acid needs. The enzyme thereby shunts fatty acid degradation intermediates from the beta-oxidation pathway into de novo fatty acid biosynthesis. This Pseudomonas aeruginosa (strain ATCC 15692 / DSM 22644 / CIP 104116 / JCM 14847 / LMG 12228 / 1C / PRS 101 / PAO1) protein is Beta-ketodecanoyl-[acyl-carrier-protein] synthase.